The chain runs to 562 residues: Dihydroxy-acid dehydratase (562 aa).

Asp-80 serves as a coordination point for Mg(2+). Residue Cys-121 participates in [2Fe-2S] cluster binding. Asp-122 and Lys-123 together coordinate Mg(2+). Lys-123 carries the N6-carboxylysine modification. Cys-194 serves as a coordination point for [2Fe-2S] cluster. Glu-446 provides a ligand contact to Mg(2+). Ser-472 (proton acceptor) is an active-site residue.

This sequence belongs to the IlvD/Edd family. In terms of assembly, homodimer. The cofactor is [2Fe-2S] cluster. Mg(2+) serves as cofactor.

It carries out the reaction (2R)-2,3-dihydroxy-3-methylbutanoate = 3-methyl-2-oxobutanoate + H2O. It catalyses the reaction (2R,3R)-2,3-dihydroxy-3-methylpentanoate = (S)-3-methyl-2-oxopentanoate + H2O. Its pathway is amino-acid biosynthesis; L-isoleucine biosynthesis; L-isoleucine from 2-oxobutanoate: step 3/4. It functions in the pathway amino-acid biosynthesis; L-valine biosynthesis; L-valine from pyruvate: step 3/4. In terms of biological role, functions in the biosynthesis of branched-chain amino acids. Catalyzes the dehydration of (2R,3R)-2,3-dihydroxy-3-methylpentanoate (2,3-dihydroxy-3-methylvalerate) into 2-oxo-3-methylpentanoate (2-oxo-3-methylvalerate) and of (2R)-2,3-dihydroxy-3-methylbutanoate (2,3-dihydroxyisovalerate) into 2-oxo-3-methylbutanoate (2-oxoisovalerate), the penultimate precursor to L-isoleucine and L-valine, respectively. This Staphylococcus aureus (strain USA300 / TCH1516) protein is Dihydroxy-acid dehydratase.